The following is a 625-amino-acid chain: DNA-directed RNA polymerase subunit gamma (625 aa).

Residues Cys71, Cys73, Cys86, and Cys89 each coordinate Zn(2+). Mg(2+) is bound by residues Asp467, Asp469, and Asp471.

It belongs to the RNA polymerase beta' chain family. RpoC1 subfamily. As to quaternary structure, in cyanobacteria the RNAP catalytic core is composed of 2 alpha, 1 beta, 1 beta', 1 gamma and 1 omega subunit. When a sigma factor is associated with the core the holoenzyme is formed, which can initiate transcription. Mg(2+) is required as a cofactor. It depends on Zn(2+) as a cofactor.

The catalysed reaction is RNA(n) + a ribonucleoside 5'-triphosphate = RNA(n+1) + diphosphate. In terms of biological role, DNA-dependent RNA polymerase catalyzes the transcription of DNA into RNA using the four ribonucleoside triphosphates as substrates. The protein is DNA-directed RNA polymerase subunit gamma of Rippkaea orientalis (strain PCC 8801 / RF-1) (Cyanothece sp. (strain PCC 8801)).